The chain runs to 363 residues: Aminomethyltransferase (363 aa).

Belongs to the GcvT family. The glycine cleavage system is composed of four proteins: P, T, L and H.

It catalyses the reaction N(6)-[(R)-S(8)-aminomethyldihydrolipoyl]-L-lysyl-[protein] + (6S)-5,6,7,8-tetrahydrofolate = N(6)-[(R)-dihydrolipoyl]-L-lysyl-[protein] + (6R)-5,10-methylene-5,6,7,8-tetrahydrofolate + NH4(+). Its function is as follows. The glycine cleavage system catalyzes the degradation of glycine. This chain is Aminomethyltransferase, found in Staphylococcus epidermidis (strain ATCC 35984 / DSM 28319 / BCRC 17069 / CCUG 31568 / BM 3577 / RP62A).